The primary structure comprises 818 residues: Response regulator SSK1 (818 aa).

In terms of domain architecture, Response regulatory spans 611 to 769 (NVLIVEDNPI…WLERKVMEWG (159 aa)). At aspartate 660 the chain carries 4-aspartylphosphate.

The protein belongs to the SSK1 family.

It localises to the cytoplasm. Its function is as follows. Two-domain response regulator protein in the two-component signal transduction system of the HOG1 pathway. Modulates stress response, melanin biosynthesis and virulence via its regulation of the phosphorylation of HOG1. The polypeptide is Response regulator SSK1 (Verticillium dahliae (strain VdLs.17 / ATCC MYA-4575 / FGSC 10137) (Verticillium wilt)).